A 71-amino-acid polypeptide reads, in one-letter code: R-phycoerythrin gamma-1 chain, chloroplastic (71 aa).

The phycourobilin site is built by cysteine 25 and cysteine 34. (2R,3E)-phycoerythrobilin is bound at residue cysteine 49. Cysteine 58 serves as a coordination point for phycourobilin.

Heteromer of 6 alpha, 6 beta and 1 gamma chains. In terms of processing, contains four covalently linked bilin chromophores.

It is found in the plastid. The protein localises to the chloroplast thylakoid membrane. Critical for the incorporation of phycoerythrin in the phycobilisome complex. The sequence is that of R-phycoerythrin gamma-1 chain, chloroplastic from Gastroclonium coulteri (Red alga).